The chain runs to 128 residues: Large ribosomal subunit protein bL17 (128 aa).

It belongs to the bacterial ribosomal protein bL17 family. In terms of assembly, part of the 50S ribosomal subunit. Contacts protein L32.

This Pseudomonas syringae pv. syringae (strain B728a) protein is Large ribosomal subunit protein bL17.